The primary structure comprises 269 residues: MLRSMLTASTTLNQLQQQIDTISSNLSNSNTTGYKAKDTNFSELVRQQFDQVDEKNEEVAKARKTPPGLRLGVGAMMSSRLVSDQGSIQKTDRDLDIAFTSPYQYLQVNVNGNRQYTRDGALYVTPSAANANQLQLVTGNGYPVLDENGNTVNIDSSMKNITINKNGTLTASDGNAVQRFNLGVVQVNNPQELKSEGNNLFSIDNAAAFEELNGANRQNIGMQQGSLEMSNVDISEQMTDLITSQRSYQLNSRTITMGDQMLGLINSVR.

Residues 7 to 65 (TASTTLNQLQQQIDTISSNLSNSNTTGYKAKDTNFSELVRQQFDQVDEKNEEVAKARKT) adopt a coiled-coil conformation.

The protein belongs to the flagella basal body rod proteins family.

The sequence is that of Flagellar hook-basal body complex protein FlhP (flhP) from Bacillus subtilis (strain 168).